The chain runs to 428 residues: Enolase (428 aa).

Gln163 is a (2R)-2-phosphoglycerate binding site. The active-site Proton donor is the Glu205. Mg(2+)-binding residues include Asp242, Glu285, and Asp312. Residues Lys337, Arg366, Ser367, and Lys388 each coordinate (2R)-2-phosphoglycerate. The active-site Proton acceptor is the Lys337.

This sequence belongs to the enolase family. Mg(2+) is required as a cofactor.

The protein resides in the cytoplasm. The protein localises to the secreted. Its subcellular location is the cell surface. It carries out the reaction (2R)-2-phosphoglycerate = phosphoenolpyruvate + H2O. The protein operates within carbohydrate degradation; glycolysis; pyruvate from D-glyceraldehyde 3-phosphate: step 4/5. Catalyzes the reversible conversion of 2-phosphoglycerate (2-PG) into phosphoenolpyruvate (PEP). It is essential for the degradation of carbohydrates via glycolysis. The polypeptide is Enolase (Neisseria meningitidis serogroup C / serotype 2a (strain ATCC 700532 / DSM 15464 / FAM18)).